Consider the following 102-residue polypeptide: Putative defensin-like protein 298 (102 aa).

Positions 1-29 (MSASKATMLILFALFLSDILLVSIPRAEA) are cleaved as a signal peptide. Cystine bridges form between Cys35–Cys53, Cys41–Cys58, Cys46–Cys60, Cys74–Cys93, Cys80–Cys98, and Cys86–Cys100.

Belongs to the DEFL family.

It is found in the secreted. In Arabidopsis thaliana (Mouse-ear cress), this protein is Putative defensin-like protein 298.